The following is a 423-amino-acid chain: Putative competence-damage inducible protein (423 aa).

The protein belongs to the CinA family.

The sequence is that of Putative competence-damage inducible protein from Streptococcus pyogenes serotype M1.